Consider the following 260-residue polypeptide: Indole-3-glycerol phosphate synthase (260 aa).

Belongs to the TrpC family.

The catalysed reaction is 1-(2-carboxyphenylamino)-1-deoxy-D-ribulose 5-phosphate + H(+) = (1S,2R)-1-C-(indol-3-yl)glycerol 3-phosphate + CO2 + H2O. The protein operates within amino-acid biosynthesis; L-tryptophan biosynthesis; L-tryptophan from chorismate: step 4/5. In Thermoanaerobacter pseudethanolicus (strain ATCC 33223 / 39E) (Clostridium thermohydrosulfuricum), this protein is Indole-3-glycerol phosphate synthase.